Reading from the N-terminus, the 344-residue chain is L-rhamnose-proton symporter (344 aa).

10 helical membrane passes run 4 to 24 (AITM…CFYA), 38 to 58 (WSVG…ATLL), 72 to 92 (TLLP…NYGL), 101 to 121 (MGIG…TPII), 131 to 151 (TQGG…VGIV), 175 to 195 (LLLA…MNAA), 214 to 234 (LPSY…FCFI), 259 to 279 (LLLS…YAWG), 290 to 310 (MSWM…GLVL), and 323 to 343 (VLSL…LGMA).

This sequence belongs to the L-rhamnose transporter (TC 2.A.7.6) family.

The protein resides in the cell inner membrane. The catalysed reaction is L-rhamnopyranose(in) + H(+)(in) = L-rhamnopyranose(out) + H(+)(out). In terms of biological role, uptake of L-rhamnose across the cytoplasmic membrane with the concomitant transport of protons into the cell (symport system). The polypeptide is L-rhamnose-proton symporter (Klebsiella pneumoniae (strain 342)).